Consider the following 566-residue polypeptide: Mucolipin-2 (566 aa).

The Cytoplasmic portion of the chain corresponds to 1–65 (MARQPYRFPQ…YRARRQIPWK (65 aa)). A helical membrane pass occupies residues 66–86 (LGLQILKIVMVTTQLVRFGLS). Over 87–288 (NQLVVAFKED…IFGSTQKNAQ (202 aa)) the chain is Extracellular. An extracellular/lumenal pore loop region spans residues 107 to 123 (KGYSGTDEDDYSCSVYT). 2 disulfide bridges follow: cysteine 164–cysteine 190 and cysteine 243–cysteine 274. Residues 289–309 (YVLVFDAFVIVICLASLILCT) traverse the membrane as a helical segment. The Cytoplasmic portion of the chain corresponds to 310–346 (RSIVLALRLRKRFLNFFLEKYKRPVCDTDQWEFINGW). The helical transmembrane segment at 347 to 367 (YVLVIISDLMTIIGSILKMEI) threads the bilayer. Topologically, residues 368 to 376 (KAKNLTNYD) are extracellular. The chain crosses the membrane as a helical span at residues 377-397 (LCSIFLGTSTLLVWVGVIRYL). The Cytoplasmic portion of the chain corresponds to 398 to 419 (GYFQAYNVLILTMQASLPKVLR). Residues 420 to 440 (FCACAGMIYLGYTFCGWIVLG) form a helical membrane-spanning segment. Residues 441 to 448 (PYHDKFEN) are Extracellular-facing. Residues 449–469 (LNTVAECLFSLVNGDDMFATF) constitute an intramembrane region (pore-forming). The Selectivity filter motif lies at 461–464 (NGDD). Residues 470–480 (AQIQQKSILVW) are Extracellular-facing. The helical transmembrane segment at 481 to 502 (LFSRLYLYSFISLFIYMILSLF) threads the bilayer. Over 503-566 (IALITDSYDT…RSDDHLIPIS (64 aa)) the chain is Cytoplasmic.

It belongs to the transient receptor (TC 1.A.4) family. Polycystin subfamily. MCOLN2 sub-subfamily. In terms of assembly, forms homooligomeric complexes; probably tetrameric. Can heterooligomerize with MCOLN1; heteromeric assemblies have different channel properties as compared to the respective homooligomers and may be tissue-specific. Interacts with TMEM176A.

It localises to the cell membrane. Its subcellular location is the late endosome membrane. The protein localises to the lysosome membrane. It is found in the recycling endosome membrane. The catalysed reaction is Ca(2+)(in) = Ca(2+)(out). It carries out the reaction Fe(2+)(in) = Fe(2+)(out). Its activity is regulated as follows. Channel activity is reduced by low extracellular/lumenal pH level. Functionally, nonselective cation channel probably playing a role in the regulation of membrane trafficking events. Acts as a Ca(2+)-permeable cation channel with inwardly rectifying activity. May activate ARF6 and be involved in the trafficking of GPI-anchored cargo proteins to the cell surface via the ARF6-regulated recycling pathway. May play a role in immune processes. In adaptive immunity, TRPML2 and TRPML1 may play redundant roles in the function of the specialized lysosomes of B cells. In the innate immune response, may play a role in the regulation of chemokine secretion and macrophage migration. Through a possible and probably tissue-specific heteromerization with MCOLN1 may be at least in part involved in many lysosome-dependent cellular events. Also functions as a Fe(2+) permeable channel. This Homo sapiens (Human) protein is Mucolipin-2.